A 212-amino-acid chain; its full sequence is Large ribosomal subunit protein uL3 (212 aa).

This sequence belongs to the universal ribosomal protein uL3 family. Part of the 50S ribosomal subunit. Forms a cluster with proteins L14 and L19.

Functionally, one of the primary rRNA binding proteins, it binds directly near the 3'-end of the 23S rRNA, where it nucleates assembly of the 50S subunit. The polypeptide is Large ribosomal subunit protein uL3 (Ruminiclostridium cellulolyticum (strain ATCC 35319 / DSM 5812 / JCM 6584 / H10) (Clostridium cellulolyticum)).